The following is a 393-amino-acid chain: Telomeric repeat-binding factor 2-interacting protein 1 (393 aa).

N-acetylalanine is present on A2. 2 positions are modified to phosphoserine: S36 and S43. Positions 78 to 101 (FISTQYILDCVDRNEKLDLEAYRL) constitute a BRCT domain. Residues 104–132 (TEQASDPKPGASTEGSTEPEPQPLTGRIA) form a disordered region. K111 is covalently cross-linked (Glycyl lysine isopeptide (Lys-Gly) (interchain with G-Cter in SUMO2)). The Myb-like domain occupies 125–185 (QPLTGRIAYT…SLKDRYLKHL (61 aa)). A phosphoserine mark is found at S151 and S153. Residue K191 forms a Glycyl lysine isopeptide (Lys-Gly) (interchain with G-Cter in SUMO2) linkage. The segment at 193–304 (LLGNAPVSPS…EEEPKVSTQE (112 aa)) is disordered. 2 positions are modified to phosphoserine: S200 and S203. Residues K205, K209, and K237 each participate in a glycyl lysine isopeptide (Lys-Gly) (interchain with G-Cter in SUMO2) cross-link. Over residues 223–252 (QNKRAPDLPEEECVKGEIKENGEADNKLFE) the composition is skewed to basic and acidic residues. Acidic residues predominate over residues 282–297 (TPEEDSETQPDEEEEE). Residue K366 forms a Glycyl lysine isopeptide (Lys-Gly) (interchain with G-Cter in SUMO2) linkage. The short motif at 377–393 (KKFGAQNVARRIEFRKK) is the Nuclear localization signal element.

Belongs to the RAP1 family. In terms of assembly, homodimer. Component of the shelterin complex (telosome) composed of TERF1, TERF2, TINF2, TERF2IP ACD and POT1. Binds to TERF2 (but not TERF1) with its C-terminus. Interacts with SLX4/BTBD12. Interacts with TERF2; the interaction is direct. Does not interact with TERF1. Associates with the I-kappa-B-kinase (IKK) core complex, composed of CHUK, IKBKB and IKBKG.

The protein localises to the nucleus. It localises to the cytoplasm. Its subcellular location is the chromosome. The protein resides in the telomere. Functionally, acts both as a regulator of telomere function and as a transcription regulator. Involved in the regulation of telomere length and protection as a component of the shelterin complex (telosome). In contrast to other components of the shelterin complex, it is dispensible for telomere capping and does not participate in the protection of telomeres against non-homologous end-joining (NHEJ)-mediated repair. Instead, it is required to negatively regulate telomere recombination and is essential for repressing homology-directed repair (HDR), which can affect telomere length. Does not bind DNA directly: recruited to telomeric double-stranded 5'-TTAGGG-3' repeats via its interaction with TERF2. Independently of its function in telomeres, also acts as a transcription regulator: recruited to extratelomeric 5'-TTAGGG-3' sites via its association with TERF2 or other factors, and regulates gene expression. When cytoplasmic, associates with the I-kappa-B-kinase (IKK) complex and acts as a regulator of the NF-kappa-B signaling by promoting IKK-mediated phosphorylation of RELA/p65, leading to activate expression of NF-kappa-B target genes. The protein is Telomeric repeat-binding factor 2-interacting protein 1 (Terf2ip) of Mus musculus (Mouse).